The chain runs to 1221 residues: Coatomer subunit alpha (1221 aa).

9 WD repeats span residues 7–46 (TKAS…LLEK), 49–88 (EHEG…CLFT), 91–130 (GHKD…CIAE), 133–172 (GHNH…KKMT), 202–241 (GHDR…VDTF), 243–282 (GHYN…TVHM), 285–323 (RDHD…PLFV), 358–399 (PSNN…SNTV), and 528–567 (WDDN…TGVK). The segment at 820 to 885 (GVEQSTSTPT…DDGGWERDDL (66 aa)) is disordered. The span at 844 to 857 (SQQQSSQQQQQQQQ) shows a compositional bias: low complexity. One copy of the WD 10 repeat lies at 910–953 (PQPGPSFSMIWARNSQFAVDHIAAGSFESAMNILNSQIGAVNFD).

Oligomeric complex that consists of at least the alpha, beta, beta', gamma, delta, epsilon and zeta subunits.

It is found in the cytoplasm. It localises to the golgi apparatus membrane. In terms of biological role, the coatomer is a cytosolic protein complex that binds to dilysine motifs and reversibly associates with Golgi non-clathrin-coated vesicles, which further mediate biosynthetic protein transport from the ER, via the Golgi up to the trans Golgi network. Coatomer complex is required for budding from Golgi membranes, and is essential for the retrograde Golgi-to-ER transport of dilysine-tagged proteins. The chain is Coatomer subunit alpha (copa) from Dictyostelium discoideum (Social amoeba).